The sequence spans 383 residues: Cytochrome b (383 aa).

4 helical membrane-spanning segments follow: residues 32–52 (FGSLLAVCLVIQILTGCFLAM), 76–98 (WLIRYTHANVASFFFIFVYCHIA), 113–133 (TWSIGVIILILMMAIAFLGYV), and 179–199 (FFSLHYILPFLLAALAVAHMI). Residues His-82 and His-96 each contribute to the heme b site. Residues His-183 and His-197 each coordinate heme b. His-202 contributes to the a ubiquinone binding site. Helical transmembrane passes span 225-245 (FIFKDLVTIFAFLLVLSIFVC), 289-309 (LLGVIAMFGSLLILLVLPLTD), 321-341 (LMKLSFWFFVVDFIILMWIGA), and 348-368 (YLEVGQIATAFYFAWFVFIVP).

This sequence belongs to the cytochrome b family. As to quaternary structure, fungal cytochrome b-c1 complex contains 10 subunits; 3 respiratory subunits, 2 core proteins and 5 low-molecular weight proteins. Cytochrome b-c1 complex is a homodimer. Requires heme b as cofactor.

It localises to the mitochondrion inner membrane. In terms of biological role, component of the ubiquinol-cytochrome c reductase complex (complex III or cytochrome b-c1 complex) that is part of the mitochondrial respiratory chain. The b-c1 complex mediates electron transfer from ubiquinol to cytochrome c. Contributes to the generation of a proton gradient across the mitochondrial membrane that is then used for ATP synthesis. The chain is Cytochrome b (cob) from Schizophyllum commune (Split gill fungus).